The following is a 249-amino-acid chain: uncharacterized protein (249 aa).

A signal peptide spans 1–25; it reads MRYLNTKNIIAAGVLLSCMSSIAWG.

The protein belongs to the periplasmic pilus chaperone family.

It localises to the periplasm. Its function is as follows. Could be required for the biogenesis of a putative fimbria. This is an uncharacterized protein from Escherichia coli (strain K12).